The following is an 80-amino-acid chain: Peroxidase (80 aa).

The interval Asp-56 to Phe-80 is disordered. Position 67 (Pro-67) interacts with substrate. Asn-70 carries N-linked (GlcNAc...) asparagine glycosylation.

It belongs to the peroxidase family. Classical plant (class III) peroxidase subfamily. The cofactor is Ca(2+). Requires heme b as cofactor.

It catalyses the reaction 2 a phenolic donor + H2O2 = 2 a phenolic radical donor + 2 H2O. Functionally, removal of H(2)O(2), oxidation of toxic reductants, biosynthesis and degradation of lignin, suberization, auxin catabolism, response to environmental stresses such as wounding, pathogen attack and oxidative stress. These functions might be dependent on each isozyme/isoform in each plant tissue. This chain is Peroxidase, found in Triticum aestivum (Wheat).